A 357-amino-acid polypeptide reads, in one-letter code: 4-hydroxymandelate synthase (357 aa).

VOC domains lie at 5-129 (EIDY…LIQR) and 158-309 (GIDH…IFTA). Residue histidine 161 coordinates Fe cation. Positions 161, 201, 214, 241, and 305 each coordinate substrate. A Fe cation-binding site is contributed by histidine 241. Position 320 (glutamate 320) interacts with Fe cation.

The protein belongs to the 4HPPD family. In terms of assembly, monomer. Requires Fe cation as cofactor.

It catalyses the reaction 3-(4-hydroxyphenyl)pyruvate + O2 = (S)-4-hydroxymandelate + CO2. It functions in the pathway antibiotic biosynthesis; vancomycin biosynthesis. Its function is as follows. Required to synthesize hydroxyphenylglycine, a recurring skeletal component of nonproteinogenic macrocyclic peptide antibiotics such as vancomycin. Catalyzes the conversion of p-hydroxyphenylpyruvate to p-hydroxymandelate. The decarboxylation and hydroxylation activities of HmaS show novel and distinct regioselectivity, compared to all other known p-hydroxyphenylpyruvate dioxygenases, by hydroxylating the benzylic position of the substrate instead of the phenyl ring. The polypeptide is 4-hydroxymandelate synthase (Amycolatopsis orientalis (Nocardia orientalis)).